The following is a 188-amino-acid chain: Calcium load-activated calcium channel (188 aa).

Residues 1–4 (MSTM) are Lumenal-facing. Residues 5–32 (FADTILIVFISICTALLAEGITWVLVYR) traverse the membrane as a helical segment. Positions 32–89 (RTDKYKRLKAEVEKQSKKLEKKKETITESAGRQQKKKIERQEEKLKNNNRDLSMVRMK) form a coiled coil. At 33 to 86 (TDKYKRLKAEVEKQSKKLEKKKETITESAGRQQKKKIERQEEKLKNNNRDLSMV) the chain is on the cytoplasmic side. Residues 87-106 (RMKSMFAIGFCFTALMGMFN) form a helical membrane-spanning segment. Over 107-120 (SIFDGRVVAKLPFV) the chain is Lumenal. The stretch at 121–130 (PLSYIQGLSH) is an intramembrane region. Over 131 to 140 (RNLLGEDYTD) the chain is Lumenal. The chain crosses the membrane as a helical span at residues 141-162 (CSFIFLYILCTMSIRQNIQKML). Over 163–188 (GLAPSRAATKQAGGFLGPPPQAAKFS) the chain is Cytoplasmic.

The protein belongs to the TMCO1 family. In terms of assembly, homodimer and homotetramer. Component of the multi-pass translocon (MPT) complex.

The protein resides in the endoplasmic reticulum membrane. It localises to the golgi apparatus membrane. Functionally, calcium-selective channel required to prevent calcium stores from overfilling, thereby playing a key role in calcium homeostasis. In response to endoplasmic reticulum (ER) overloading, assembles into a homotetramer, forming a functional calcium-selective channel, regulating the calcium content in endoplasmic reticulum store. Component of the multi-pass translocon (MPT) complex that mediates insertion of multi-pass membrane proteins into the lipid bilayer of membranes. The polypeptide is Calcium load-activated calcium channel (Danio rerio (Zebrafish)).